The sequence spans 517 residues: 2,3-bisphosphoglycerate-independent phosphoglycerate mutase 1 (517 aa).

Mn(2+)-binding residues include Asp17 and Ser67. Ser67 (phosphoserine intermediate) is an active-site residue. Residues His128, Arg158–Asp159, Arg190, Arg196, Arg267–Arg270, and Lys340 each bind substrate. Residues Asp407, His411, Asp448, His449, and His467 each contribute to the Mn(2+) site.

The protein belongs to the BPG-independent phosphoglycerate mutase family. Requires Mn(2+) as cofactor.

The catalysed reaction is (2R)-2-phosphoglycerate = (2R)-3-phosphoglycerate. It participates in carbohydrate degradation; glycolysis; pyruvate from D-glyceraldehyde 3-phosphate: step 3/5. In terms of biological role, catalyzes the interconversion of 2-phosphoglycerate and 3-phosphoglycerate. The chain is 2,3-bisphosphoglycerate-independent phosphoglycerate mutase 1 from Methanosarcina barkeri (strain Fusaro / DSM 804).